We begin with the raw amino-acid sequence, 720 residues long: Engulfment and cell motility protein 3 (720 aa).

The region spanning 307–479 is the ELMO domain; it reads EQREQLQVLR…VVREQLARTL (173 aa). The PH domain occupies 542-664; the sequence is RLCEGTLFRK…TDGLSALLGS (123 aa). An SH3-binding motif is present at residues 696 to 706; it reads PERPPPVPPPP.

In terms of assembly, probably interacts directly with the SH3-domain of DOCK1 via its SH3-binding site. Part of a complex with DOCK1 and RAC1. Interacts with ADGRB3.

It localises to the cytoplasm. Functionally, involved in cytoskeletal rearrangements required for phagocytosis of apoptotic cells and cell motility. Acts in association with DOCK1 and CRK. Was initially proposed to be required in complex with DOCK1 to activate Rac Rho small GTPases. May enhance the guanine nucleotide exchange factor (GEF) activity of DOCK1. The protein is Engulfment and cell motility protein 3 (ELMO3) of Homo sapiens (Human).